The sequence spans 107 residues: Thioredoxin (107 aa).

The Thioredoxin domain maps to 2 to 107 (SVSQVTDASF…LESTLNKYIS (106 aa)). Catalysis depends on nucleophile residues cysteine 31 and cysteine 34. A disulfide bond links cysteine 31 and cysteine 34.

Belongs to the thioredoxin family.

The protein resides in the plastid. The protein localises to the chloroplast. Its function is as follows. Participates in various redox reactions through the reversible oxidation of its active center dithiol to a disulfide and catalyzes dithiol-disulfide exchange reactions. The polypeptide is Thioredoxin (trxA) (Porphyra purpurea (Red seaweed)).